We begin with the raw amino-acid sequence, 323 residues long: Olfactory receptor 2AE1 (323 aa).

The Extracellular segment spans residues 1–25; the sequence is MWQKNQTSLADFILEGLFDDSLTHL. A glycan (N-linked (GlcNAc...) asparagine) is linked at Asn-5. The helical transmembrane segment at 26 to 49 threads the bilayer; the sequence is FLFSLTMVVFLIAVSGNTLTILLI. At 50–57 the chain is on the cytoplasmic side; that stretch reads CIDPQLHT. Residues 58–79 form a helical membrane-spanning segment; sequence PMYFLLSQLSLMDLMHVSTIIL. The Extracellular segment spans residues 80 to 100; sequence KMATNYLSGKKSISFVGCATQ. The cysteines at positions 97 and 189 are disulfide-linked. The helical transmembrane segment at 101–120 threads the bilayer; the sequence is HFLYLCLGGAECFLLAVMSY. Over 121–139 the chain is Cytoplasmic; the sequence is DRYVAICHPLRYAVLMNKK. A helical membrane pass occupies residues 140 to 158; the sequence is VGLMMAVMSWLGASVNSLI. Topologically, residues 159–195 are extracellular; that stretch reads HMAILMHFPFCGPRKVYHFYCEFPAVVKLVCGDITVY. A helical membrane pass occupies residues 196-218; that stretch reads ETTVYISSILLLLPIFLISTSYV. Residues 219–235 lie on the Cytoplasmic side of the membrane; that stretch reads FILQSVIQMRSSGSKRN. A helical transmembrane segment spans residues 236–258; that stretch reads AFATCGSHLTVVSLWFGACIFSY. At 259–271 the chain is on the extracellular side; it reads MRPRSQCTLLQNK. Residues 272–291 traverse the membrane as a helical segment; the sequence is VGSVFYSIITPTLNSLIYTL. The Cytoplasmic portion of the chain corresponds to 292–323; it reads RNKDVAKALRRVLRRDVITQCIQRLQLWLPRV.

This sequence belongs to the G-protein coupled receptor 1 family.

It localises to the cell membrane. Functionally, odorant receptor. The polypeptide is Olfactory receptor 2AE1 (OR2AE1) (Homo sapiens (Human)).